The chain runs to 476 residues: MTESAPSAFFTTSTPADHVHEEESSNTGYFENLPENDIHSFFEIDATSEWIKQGNHQRIALQFPDSLLPYSEKVTKLIESRFRSESAKKTFVLADTSYRSCCVDEVAAAHADCTALVHFGEACHSAPTDKIDVKYVLGSMPIFIDQFRMEFQNVADQLTAEHIVLLMDSCFSHEQEKVAAVIKEVLPGNRHVECSLLPSEDVLKQNRQNIYLGREIPSCLRNNQPTDLIFCGFPNSPLLPIWLLSYPSCSTVSHFNPINKTIQHESTRSSRLLRKRLFLVEKLKDADTVGLVVGSVGVDKHREAVKRMREMCKKAGKKIYVISVGKINVPKLSNFSTDIDVFVLLSCPFGVVLDSSDYFRPVVSYFEAEIALNPAKTWAADFGWSAEFAAFLEDKIETEVPDDKAAGDFSLISGKVRVQKTEEEKNGDGPSSVAIYNPGYCNDRTWKGLNDGVSTAEDSTKMGEGRSGIAQGYSGK.

The span at 1 to 15 (MTESAPSAFFTTSTP) shows a compositional bias: polar residues. Residues 1–24 (MTESAPSAFFTTSTPADHVHEEES) form a disordered region. [4Fe-4S] cluster-binding residues include Cys-102, Cys-123, and Cys-347. The interval 451 to 476 (DGVSTAEDSTKMGEGRSGIAQGYSGK) is disordered.

Belongs to the DPH1/DPH2 family. DPH2 subfamily. In terms of assembly, component of the 2-(3-amino-3-carboxypropyl)histidine synthase complex composed of dph-1, dph-2, dph-3 and a NADH-dependent reductase. Requires [4Fe-4S] cluster as cofactor.

It participates in protein modification; peptidyl-diphthamide biosynthesis. In terms of biological role, required for the first step of diphthamide biosynthesis, a post-translational modification of histidine which occurs in elongation factor 2. Dph-1 and dph-2 transfer a 3-amino-3-carboxypropyl (ACP) group from S-adenosyl-L-methionine (SAM) to a histidine residue, the reaction is assisted by a reduction system comprising dph-3 and a NADH-dependent reductase. Facilitates the reduction of the catalytic iron-sulfur cluster found in the dph-1 subunit. This chain is 2-(3-amino-3-carboxypropyl)histidine synthase subunit 2 (dph-2), found in Caenorhabditis elegans.